We begin with the raw amino-acid sequence, 529 residues long: GMP synthase [glutamine-hydrolyzing] (529 aa).

In terms of domain architecture, Glutamine amidotransferase type-1 spans 9–211 (RILILDFGSQ…VKDICGCECL (203 aa)). The Nucleophile role is filled by Cys86. Catalysis depends on residues His185 and Glu187. In terms of domain architecture, GMPS ATP-PPase spans 212 to 404 (WTPATIIDDA…LGLPYDMLYR (193 aa)). ATP is bound at residue 239 to 245 (SGGVDSS).

As to quaternary structure, homodimer.

The catalysed reaction is XMP + L-glutamine + ATP + H2O = GMP + L-glutamate + AMP + diphosphate + 2 H(+). It functions in the pathway purine metabolism; GMP biosynthesis; GMP from XMP (L-Gln route): step 1/1. In terms of biological role, catalyzes the synthesis of GMP from XMP. The chain is GMP synthase [glutamine-hydrolyzing] from Aeromonas hydrophila subsp. hydrophila (strain ATCC 7966 / DSM 30187 / BCRC 13018 / CCUG 14551 / JCM 1027 / KCTC 2358 / NCIMB 9240 / NCTC 8049).